Here is a 305-residue protein sequence, read N- to C-terminus: MQLLLALLALAYVAPSTEDSGWCYEIQTKDPRSSCLGPEKWPGACKENQQSPINIVTARTKVNPRLTPFILVGYDQKQQWPIKNNQHTVEMTLGGGACIIGGDLPARYEAVQLHLHWSNGNDNGSEHSIDGRHFAMEMHIVHKKLTSSKEDSKDKFAVLAFMIEVGDKVNKGFQPLVEALPSISKPHSTSTVRESSLQDMLPPSTKMYTYFRYNGSLTTPNCDETVIWTVYKQPIKIHKNQFLEFSKNLYYDEDQKLNMKDNVRPLQPLGKRQVFKSHAPGQLLSLPLPTLLVPTLTCLVANFLQ.

A signal peptide spans 1 to 17; that stretch reads MQLLLALLALAYVAPST. An Alpha-carbonic anhydrase domain is found at 20–278; the sequence is SGWCYEIQTK…LGKRQVFKSH (259 aa). 2 cysteine pairs are disulfide-bonded: cysteine 23/cysteine 35 and cysteine 45/cysteine 222. Histidine 87 functions as the Proton donor/acceptor in the catalytic mechanism. Zn(2+) contacts are provided by histidine 114 and histidine 116. N-linked (GlcNAc...) asparagine glycosylation is present at asparagine 123. Residue histidine 139 participates in Zn(2+) binding. A glycan (N-linked (GlcNAc...) asparagine) is linked at asparagine 214. 218-219 contacts substrate; the sequence is TT. Serine 277 is lipidated: GPI-anchor amidated serine. Residues 278–305 constitute a propeptide, removed in mature form; that stretch reads HAPGQLLSLPLPTLLVPTLTCLVANFLQ.

The protein belongs to the alpha-carbonic anhydrase family. As to quaternary structure, interacts with SLC4A4. The cofactor is Zn(2+).

It localises to the cell membrane. It catalyses the reaction hydrogencarbonate + H(+) = CO2 + H2O. Inhibited by acetazolamide. Catalyzes the reversible hydration of carbon dioxide into bicarbonate and protons and thus is essential to maintaining intracellular and extracellular pH. May stimulate the sodium/bicarbonate transporter activity of SLC4A4 that acts in pH homeostasis. It is essential for acid overload removal from the retina and retina epithelium, and acid release in the choriocapillaris in the choroid. This Mus musculus (Mouse) protein is Carbonic anhydrase 4 (Ca4).